The following is a 393-amino-acid chain: Pyrimidine monooxygenase RutA (393 aa).

Residues 79–80 (IK), asparagine 145, glutamate 154, 170–171 (RY), and serine 220 contribute to the FMN site.

This sequence belongs to the NtaA/SnaA/DszA monooxygenase family. RutA subfamily.

It carries out the reaction uracil + FMNH2 + NADH + O2 = (Z)-3-ureidoacrylate + FMN + NAD(+) + H2O + H(+). It catalyses the reaction thymine + FMNH2 + NADH + O2 = (Z)-2-methylureidoacrylate + FMN + NAD(+) + H2O + H(+). Its function is as follows. Catalyzes the pyrimidine ring opening between N-3 and C-4 by an unusual flavin hydroperoxide-catalyzed mechanism, adding oxygen atoms in the process to yield ureidoacrylate peracid, that immediately reacts with FMN forming ureidoacrylate and FMN-N(5)-oxide. The FMN-N(5)-oxide reacts spontaneously with NADH to produce FMN. Requires the flavin reductase RutF to regenerate FMN in vivo. The chain is Pyrimidine monooxygenase RutA from Escherichia coli O18:K1:H7 (strain IHE3034 / ExPEC).